We begin with the raw amino-acid sequence, 380 residues long: 1-deoxy-D-xylulose 5-phosphate reductoisomerase (380 aa).

Thr10, Gly11, Ser12, Ile13, Gly36, Arg37, Asn38, and Asn120 together coordinate NADPH. Lys121 serves as a coordination point for 1-deoxy-D-xylulose 5-phosphate. Residue Glu122 participates in NADPH binding. Asp146 lines the Mn(2+) pocket. 4 residues coordinate 1-deoxy-D-xylulose 5-phosphate: Ser147, Glu148, Ser172, and His195. Residue Glu148 coordinates Mn(2+). Gly201 provides a ligand contact to NADPH. 4 residues coordinate 1-deoxy-D-xylulose 5-phosphate: Ser208, Asn213, Lys214, and Glu217. Glu217 is a Mn(2+) binding site.

It belongs to the DXR family. Requires Mg(2+) as cofactor. Mn(2+) serves as cofactor.

The enzyme catalyses 2-C-methyl-D-erythritol 4-phosphate + NADP(+) = 1-deoxy-D-xylulose 5-phosphate + NADPH + H(+). The protein operates within isoprenoid biosynthesis; isopentenyl diphosphate biosynthesis via DXP pathway; isopentenyl diphosphate from 1-deoxy-D-xylulose 5-phosphate: step 1/6. Functionally, catalyzes the NADPH-dependent rearrangement and reduction of 1-deoxy-D-xylulose-5-phosphate (DXP) to 2-C-methyl-D-erythritol 4-phosphate (MEP). This is 1-deoxy-D-xylulose 5-phosphate reductoisomerase from Listeria innocua serovar 6a (strain ATCC BAA-680 / CLIP 11262).